The sequence spans 1460 residues: Cilia- and flagella-associated protein 43 (1460 aa).

WD repeat units follow at residues 46 to 87 (EGRY…HLQC), 91 to 132 (VATV…RLVK), 184 to 221 (SKGH…MKNY), 303 to 342 (RRRS…AGHT), 428 to 468 (IFAC…DSAS), 529 to 569 (MRDH…MKLP), 589 to 628 (FGRG…IHYS), 911 to 951 (EIDP…VTEV), and 1129 to 1170 (NRRF…CRAV). 2 coiled-coil regions span residues 1170–1214 (VVEA…AEEA) and 1399–1446 (LGEH…LREA).

It belongs to the CFAP43 family.

It is found in the cell projection. The protein localises to the cilium. The protein resides in the flagellum. It localises to the cytoplasm. Its subcellular location is the cytoskeleton. It is found in the flagellum axoneme. Functionally, flagellar protein involved in flagellum axoneme organization and function. In Trypanosoma brucei brucei (strain 927/4 GUTat10.1), this protein is Cilia- and flagella-associated protein 43.